The sequence spans 883 residues: Alanine--tRNA ligase (883 aa).

Zn(2+) contacts are provided by His-560, His-564, Cys-665, and His-669.

The protein belongs to the class-II aminoacyl-tRNA synthetase family. It depends on Zn(2+) as a cofactor.

Its subcellular location is the cytoplasm. The catalysed reaction is tRNA(Ala) + L-alanine + ATP = L-alanyl-tRNA(Ala) + AMP + diphosphate. Catalyzes the attachment of alanine to tRNA(Ala) in a two-step reaction: alanine is first activated by ATP to form Ala-AMP and then transferred to the acceptor end of tRNA(Ala). Also edits incorrectly charged Ser-tRNA(Ala) and Gly-tRNA(Ala) via its editing domain. This Mesomycoplasma hyopneumoniae (strain J / ATCC 25934 / NCTC 10110) (Mycoplasma hyopneumoniae) protein is Alanine--tRNA ligase.